Reading from the N-terminus, the 221-residue chain is Stromal cell-derived factor 2-like protein 1 (221 aa).

An N-terminal signal peptide occupies residues 1 to 28 (MWSAGRGGAAWPVLLGLLLALLVPGGGA). MIR domains are found at residues 33-87 (AELV…IRGG), 95-150 (GSPV…VRCS), and 151-205 (GQHW…AMEG). Ser215 bears the Phosphoserine mark. The short motif at 218 to 221 (HDEL) is the Prevents secretion from ER element.

Part of a large chaperone multiprotein complex comprising CABP1, DNAJB11, HSP90B1, HSPA5, HYOU, PDIA2, PDIA4, PPIB, SDF2L1, UGGT1 and very small amounts of ERP29, but not, or at very low levels, CALR nor CANX. Ubiquitously expressed with high expression in testis, moderate expression in the pancreas, spleen, prostate, small intestine and colon. Very low expression is seen in brain and skeletal muscle.

It is found in the endoplasmic reticulum lumen. This is Stromal cell-derived factor 2-like protein 1 (SDF2L1) from Homo sapiens (Human).